The chain runs to 297 residues: N-acetylmuramic acid 6-phosphate etherase (297 aa).

Residues 55–218 enclose the SIS domain; that stretch reads AAAALKSGGR…STGAMVKFGK (164 aa). Residue E83 is the Proton donor of the active site. E114 is an active-site residue.

It belongs to the GCKR-like family. MurNAc-6-P etherase subfamily. Homodimer.

The catalysed reaction is N-acetyl-D-muramate 6-phosphate + H2O = N-acetyl-D-glucosamine 6-phosphate + (R)-lactate. It functions in the pathway amino-sugar metabolism; 1,6-anhydro-N-acetylmuramate degradation. It participates in amino-sugar metabolism; N-acetylmuramate degradation. The protein operates within cell wall biogenesis; peptidoglycan recycling. Functionally, specifically catalyzes the cleavage of the D-lactyl ether substituent of MurNAc 6-phosphate, producing GlcNAc 6-phosphate and D-lactate. Together with AnmK, is also required for the utilization of anhydro-N-acetylmuramic acid (anhMurNAc) either imported from the medium or derived from its own cell wall murein, and thus plays a role in cell wall recycling. This Salmonella typhi protein is N-acetylmuramic acid 6-phosphate etherase.